Consider the following 327-residue polypeptide: Tagatose 1,6-diphosphate aldolase 2 (327 aa).

It belongs to the aldolase LacD family.

It carries out the reaction D-tagatofuranose 1,6-bisphosphate = D-glyceraldehyde 3-phosphate + dihydroxyacetone phosphate. It functions in the pathway carbohydrate metabolism; D-tagatose 6-phosphate degradation; D-glyceraldehyde 3-phosphate and glycerone phosphate from D-tagatose 6-phosphate: step 2/2. In Streptococcus pyogenes serotype M3 (strain ATCC BAA-595 / MGAS315), this protein is Tagatose 1,6-diphosphate aldolase 2 (lacD2).